We begin with the raw amino-acid sequence, 183 residues long: MVVDLKMLAMIFIINFAYITLNTIRFMLTMKGYRVIAPLVSMAEITIYVLGLSMVLNRLDNPLNLLVYALGYAVGISVGIKIEDYLALGYIMVSVILPSTTEQFHLPETLREHGYGVTQSVAYGREGERMVLEILSPRKNERTLYKLINQLEPRAFIISYEPKFISGGFWTKKVRKRNDAISH.

The next 3 membrane-spanning stretches (helical) occupy residues 1–21, 35–55, and 62–82; these read MVVDLKMLAMIFIINFAYITL, VIAPLVSMAEITIYVLGLSMV, and PLNLLVYALGYAVGISVGIKI.

Belongs to the UPF0316 family.

It localises to the cell membrane. In Enterococcus faecalis (strain ATCC 700802 / V583), this protein is UPF0316 protein EF_1609.